The chain runs to 264 residues: Tryptophan synthase alpha chain (264 aa).

Residues Glu-49 and Asp-60 each act as proton acceptor in the active site.

The protein belongs to the TrpA family. In terms of assembly, tetramer of two alpha and two beta chains.

The enzyme catalyses (1S,2R)-1-C-(indol-3-yl)glycerol 3-phosphate + L-serine = D-glyceraldehyde 3-phosphate + L-tryptophan + H2O. It participates in amino-acid biosynthesis; L-tryptophan biosynthesis; L-tryptophan from chorismate: step 5/5. Its function is as follows. The alpha subunit is responsible for the aldol cleavage of indoleglycerol phosphate to indole and glyceraldehyde 3-phosphate. This chain is Tryptophan synthase alpha chain, found in Geobacter sulfurreducens (strain ATCC 51573 / DSM 12127 / PCA).